A 563-amino-acid chain; its full sequence is MAPLLAAAMNHAAHPVLRSHLGPNNESFSRHHLSSSPQSSKRRFNLSFTPRSARVGNQNGVQLLSPSEIPRRDWFPSDFIFGAATSAYQIEGAWNEDGKGESNWDHFCHNFPERIMDGSNADIGANSYHMYKTDVRLLKEMGMDAYRFSISWPRILPKGTVEGGINQDGIDYYKRLINLLLENGIEPYVTIFHWDVPQALEEKYGGFLDKTQKRIVNDYKNFAKVCFDNFGDKVKNWLTFNEPQTFTSFSYGTGVFAPGRCSPGLDCAIPTGNSLVEPYIAGHNILLAHAEAVDLYNKYYKGENGRIGLAFDVMGRVPYGTSFLDEQAKERSMDINLGWFLEPVVRGDYPFSMRSLARERLPFFSDKQQEKLVGSYNMLGINYYTSIFSKHIDISPKYSPVLNTDDAYASQETYGPDGKPIGPPMGNPWIYLYPEGLKDILMIMKNKYGNPPIYITENGIGDVDTKEKPLPMEAALNDYKRLDYIQRHISTLKESIDLGANVHGYFAWSLLDNFEWYAGYTERYGIVYVDRKNNYTRYMKESAKWLKEFNTAKKPSKKIITPA.

The transit peptide at 1–51 (MAPLLAAAMNHAAHPVLRSHLGPNNESFSRHHLSSSPQSSKRRFNLSFTPR) directs the protein to the chloroplast. The tract at residues 17–43 (LRSHLGPNNESFSRHHLSSSPQSSKRR) is disordered. Residues Gln-89, His-193, and 241–242 (NE) contribute to the a beta-D-glucoside site. The active-site Proton donor is Glu-242. An intrachain disulfide couples Cys-261 to Cys-267. The interval 322-358 (SFLDEQAKERSMDINLGWFLEPVVRGDYPFSMRSLAR) is dimerization. An a beta-D-glucoside-binding site is contributed by Tyr-384. Dimerization stretches follow at residues 391 to 402 (HIDISPKYSPVL) and 447 to 450 (KYGN). Residues Glu-457, Trp-508, 515-516 (EW), and Tyr-524 contribute to the a beta-D-glucoside site. The active-site Nucleophile is the Glu-457.

Belongs to the glycosyl hydrolase 1 family. In terms of assembly, homo- and heterodimer. In terms of tissue distribution, expressed in leaves only starting at day 6 after germination.

The protein resides in the plastid. It localises to the chloroplast. It carries out the reaction Hydrolysis of terminal, non-reducing beta-D-glucosyl residues with release of beta-D-glucose.. The catalysed reaction is DIMBOA beta-D-glucoside + H2O = DIMBOA + D-glucose. It catalyses the reaction DIBOA beta-D-glucoside + H2O = DIBOA + D-glucose. Functionally, beta-glucosidase acting poorly on artificial aryl beta-glucosides. Has no activity toward the chromogenic substrate 6-bromo-2-naphthyl-beta-D-glucoside (6BNGlc). This Zea mays (Maize) protein is 4-hydroxy-7-methoxy-3-oxo-3,4-dihydro-2H-1,4-benzoxazin-2-yl glucoside beta-D-glucosidase 2, chloroplastic (GLU2).